A 126-amino-acid chain; its full sequence is Large ribosomal subunit protein bL17 (126 aa).

It belongs to the bacterial ribosomal protein bL17 family. As to quaternary structure, part of the 50S ribosomal subunit. Contacts protein L32.

The protein is Large ribosomal subunit protein bL17 of Laribacter hongkongensis (strain HLHK9).